Here is a 251-residue protein sequence, read N- to C-terminus: DNA repair protein RecO (251 aa).

This sequence belongs to the RecO family.

Functionally, involved in DNA repair and RecF pathway recombination. The sequence is that of DNA repair protein RecO from Nitratidesulfovibrio vulgaris (strain ATCC 29579 / DSM 644 / CCUG 34227 / NCIMB 8303 / VKM B-1760 / Hildenborough) (Desulfovibrio vulgaris).